A 71-amino-acid chain; its full sequence is MPLIDYFYVLQFENKEYFKAFKLDESGYLTSSDLHEASKIHNMLEVIEVASELKTKCNVQCEVREIQVVKR.

This chain is SPbeta prophage-derived uncharacterized protein YopF (yopF), found in Bacillus subtilis (strain 168).